We begin with the raw amino-acid sequence, 338 residues long: 1-aminocyclopropane-1-carboxylate deaminase (338 aa).

Residue Lys51 is modified to N6-(pyridoxal phosphate)lysine. Ser78 (nucleophile) is an active-site residue.

It belongs to the ACC deaminase/D-cysteine desulfhydrase family. Homotrimer. Requires pyridoxal 5'-phosphate as cofactor.

The catalysed reaction is 1-aminocyclopropane-1-carboxylate + H2O = 2-oxobutanoate + NH4(+). Its function is as follows. Catalyzes a cyclopropane ring-opening reaction, the irreversible conversion of 1-aminocyclopropane-1-carboxylate (ACC) to ammonia and alpha-ketobutyrate. Allows growth on ACC as a nitrogen source. The sequence is that of 1-aminocyclopropane-1-carboxylate deaminase from Methylibium petroleiphilum (strain ATCC BAA-1232 / LMG 22953 / PM1).